Consider the following 30-residue polypeptide: Cyclotide hyen-C (30 aa).

The cyclopeptide (Gly-Asn) cross-link spans 1–30 (GTHPCQETCVTSTRCSTQGCHCNWPICFKN). Cystine bridges form between Cys-5/Cys-20, Cys-9/Cys-22, and Cys-15/Cys-27.

This is a cyclic peptide. As to expression, detected in stems (at protein level).

Its function is as follows. Probably participates in a plant defense mechanism. Does not display any cytotoxic activity towards K562, HeLa, MCF-7, HUVEC or red blood cells. Does not bind to phospholipd membranes containing 1-palmitoyl 2-oleoyl phosphatidylcholine (POPC) or 1-palmitoyl-2-oleophosphatidylethanolamine (POPE). In Pigea enneasperma (Spade flower), this protein is Cyclotide hyen-C.